Reading from the N-terminus, the 164-residue chain is Cyclic pyranopterin monophosphate synthase (164 aa).

Substrate-binding positions include 73-75 and 111-112; these read LCH and ME. Residue D126 is part of the active site.

The protein belongs to the MoaC family. In terms of assembly, homohexamer; trimer of dimers.

It carries out the reaction (8S)-3',8-cyclo-7,8-dihydroguanosine 5'-triphosphate = cyclic pyranopterin phosphate + diphosphate. Its pathway is cofactor biosynthesis; molybdopterin biosynthesis. Functionally, catalyzes the conversion of (8S)-3',8-cyclo-7,8-dihydroguanosine 5'-triphosphate to cyclic pyranopterin monophosphate (cPMP). The chain is Cyclic pyranopterin monophosphate synthase from Herpetosiphon aurantiacus (strain ATCC 23779 / DSM 785 / 114-95).